A 310-amino-acid chain; its full sequence is Ribosomal RNA small subunit methyltransferase H (310 aa).

S-adenosyl-L-methionine-binding positions include Gly-32–His-34, Asp-52, Ala-83, Asp-100, and Gln-107.

The protein belongs to the methyltransferase superfamily. RsmH family.

The protein resides in the cytoplasm. The enzyme catalyses cytidine(1402) in 16S rRNA + S-adenosyl-L-methionine = N(4)-methylcytidine(1402) in 16S rRNA + S-adenosyl-L-homocysteine + H(+). In terms of biological role, specifically methylates the N4 position of cytidine in position 1402 (C1402) of 16S rRNA. This Geobacillus sp. (strain WCH70) protein is Ribosomal RNA small subunit methyltransferase H.